The following is a 147-amino-acid chain: Hemoglobin subunit gamma (147 aa).

One can recognise a Globin domain in the interval 3–147; it reads HFTAEEKAVI…VAIALAHKYH (145 aa). 2 residues coordinate heme b: histidine 64 and histidine 93.

The protein belongs to the globin family. In terms of assembly, heterotetramer of two alpha chains and two gamma chains in fetal hemoglobin (Hb F). As to expression, red blood cells.

Functionally, gamma chains make up the fetal hemoglobin F, in combination with alpha chains. This is Hemoglobin subunit gamma (HBG) from Eulemur fulvus fulvus (Brown lemur).